The chain runs to 494 residues: MGSTSSLYAAIDLGSNSFHMLVVREVAGSIQTLTRIKRKVRLAAGLNSENALSNEAMERGWQCLRLFAERLQDIPPSQIRVVATATLRLAVNAGDFIAKAQEILGCPVQVISGEEEARLIYQGVAHTTGGADQRLVVDIGGASTELVTGTGAQTTSLFSLSMGCVTWLERYFADRNLGQENFDAAEKAAREVLRPVADELRYHGWKVCVGASGTVQALQEIMMAQGMDERITLEKLQQLKQRAIHCGRLEELEIDGLTLERALVFPSGLAILIAIFTELNIQCMTLAGGALREGLVYGMLHLAVEQDIRSRTLRNIQRRFMIDIDQAQRVAKVAANFFDQVEKEWHLEAISRDLLISACQLHEIGLSVDFKQAPQHAAYLVRNLDLPGFTPAQKKLLATLLLNQTNPVDLSSLHQQNAVPPRVAEQLCRLLRLAIIFASRRRDDLVPEMTLQANHELLTLTLPQGWLTQHPLGKEIIAQESQWQSYVHWPLEVH.

It belongs to the GppA/Ppx family. GppA subfamily.

The catalysed reaction is guanosine 3'-diphosphate 5'-triphosphate + H2O = guanosine 3',5'-bis(diphosphate) + phosphate + H(+). The protein operates within purine metabolism; ppGpp biosynthesis; ppGpp from GTP: step 2/2. In terms of biological role, catalyzes the conversion of pppGpp to ppGpp. Guanosine pentaphosphate (pppGpp) is a cytoplasmic signaling molecule which together with ppGpp controls the 'stringent response', an adaptive process that allows bacteria to respond to amino acid starvation, resulting in the coordinated regulation of numerous cellular activities. This chain is Guanosine-5'-triphosphate,3'-diphosphate pyrophosphatase, found in Escherichia coli O139:H28 (strain E24377A / ETEC).